Here is a 520-residue protein sequence, read N- to C-terminus: Vacuolar protein sorting-associated protein 9A (520 aa).

The 145-residue stretch at 102–246 (VIADEKLFQK…ISNIDAKSIS (145 aa)) folds into the VPS9 domain. N180 and D185 together coordinate GTP. Disordered stretches follow at residues 267–331 (DSQT…AESI), 396–433 (LAPSSSPLQASSGFNTSKESEDHRRSSSDVQMTKETDR), and 464–520 (LVEG…EASE). A compositionally biased stretch (polar residues) spans 287-323 (LQKTQSLNPKRENTLFQSKSSDSLSGTNELLNINSET). S330 is subject to Phosphoserine. The segment covering 396–407 (LAPSSSPLQASS) has biased composition (low complexity). Basic and acidic residues-rich tracts occupy residues 413 to 433 (KESEDHRRSSSDVQMTKETDR) and 464 to 497 (LVEGKDEERDSKVQGEVDAKDIELMKQIPKREGD).

As to quaternary structure, homodimer. The homodimer interacts with RABF2B. Interacts with RABF1 and RABF2A. Widely expressed.

Functionally, functions as a guanine nucleotide exchange factor (GEF) for Rab small GTPases. Activates specifically RABF1, RABF2A and RABF2B proteins. Required for early stages of embryogenesis, cytokinesis, embryogenesis, and organ development. Is essential for the establishment or maintenance of the polar localization of the auxin efflux carrier PIN1. This chain is Vacuolar protein sorting-associated protein 9A, found in Arabidopsis thaliana (Mouse-ear cress).